The primary structure comprises 188 residues: Protein Cripto (188 aa).

The signal sequence occupies residues 1–30; that stretch reads MDCRKMARFSYSVIWIMAISKVFELGLVAG. In terms of domain architecture, EGF-like spans 78–107; that stretch reads LNRTCCLNGGTCMLGSFCACPPSFYGRNCE. Asn79 carries N-linked (GlcNAc...) asparagine glycosylation. 6 disulfides stabilise this stretch: Cys82-Cys89, Cys83-Cys95, Cys97-Cys106, Cys115-Cys133, Cys128-Cys149, and Cys131-Cys140. Asp150 is lipidated: GPI-anchor amidated aspartate. A propeptide spans 151–188 (removed in mature form); the sequence is GLVMDEHLVASRTPELPPSARTTTFMLVGICLSIQSYY.

The protein belongs to the EGF-CFC (Cripto-1/FRL1/Cryptic) family. In terms of assembly, interacts with the activin type-1 receptor ACVR1B. Post-translationally, the GPI-anchor is attached to the protein in the endoplasmic reticulum and serves to target the protein to the cell surface. There, it is processed by GPI processing phospholipase A2 (TMEM8A), removing an acyl-chain at the sn-2 position of GPI and releasing CRIPTO as a lysophosphatidylinositol-bearing form, which is further cleaved by phospholipase D (GPLD1) into a soluble form. In terms of tissue distribution, preferentially expressed in gastric and colorectal carcinomas than in their normal counterparts. Expressed in breast and lung.

It is found in the cell membrane. The protein localises to the secreted. In terms of biological role, GPI-anchored cell membrane protein involved in Nodal signaling. Cell-associated CRIPTO acts as a Nodal coreceptor in cis. Shedding of CRIPTO by TMEM8A modulates Nodal signaling by allowing soluble CRIPTO to act as a Nodal coreceptor on other cells. Could play a role in the determination of the epiblastic cells that subsequently give rise to the mesoderm. The sequence is that of Protein Cripto from Homo sapiens (Human).